A 127-amino-acid polypeptide reads, in one-letter code: Fluoride-specific ion channel FluC (127 aa).

4 helical membrane passes run 4-24 (LLLA…LLSM), 35-55 (LGTL…FAWF), 71-91 (TGFC…VFLL), and 103-123 (VFVN…LFSA). 2 residues coordinate Na(+): glycine 75 and threonine 78.

This sequence belongs to the fluoride channel Fluc/FEX (TC 1.A.43) family.

The protein resides in the cell inner membrane. The enzyme catalyses fluoride(in) = fluoride(out). Its activity is regulated as follows. Na(+) is not transported, but it plays an essential structural role and its presence is essential for fluoride channel function. Its function is as follows. Fluoride-specific ion channel. Important for reducing fluoride concentration in the cell, thus reducing its toxicity. This is Fluoride-specific ion channel FluC from Escherichia coli O81 (strain ED1a).